Consider the following 167-residue polypeptide: uncharacterized protein (167 aa).

This is an uncharacterized protein from Magallana gigas (Pacific oyster).